Reading from the N-terminus, the 271-residue chain is Enolase-phosphatase E1 (271 aa).

Asp16 and Glu18 together coordinate Mg(2+). Residues 150–151 (SS) and Lys199 each bind substrate. Asp226 contacts Mg(2+).

This sequence belongs to the HAD-like hydrolase superfamily. MasA/MtnC family. As to quaternary structure, monomer. Requires Mg(2+) as cofactor.

It localises to the cytoplasm. It is found in the nucleus. The catalysed reaction is 5-methylsulfanyl-2,3-dioxopentyl phosphate + H2O = 1,2-dihydroxy-5-(methylsulfanyl)pent-1-en-3-one + phosphate. Its pathway is amino-acid biosynthesis; L-methionine biosynthesis via salvage pathway; L-methionine from S-methyl-5-thio-alpha-D-ribose 1-phosphate: step 3/6. It functions in the pathway amino-acid biosynthesis; L-methionine biosynthesis via salvage pathway; L-methionine from S-methyl-5-thio-alpha-D-ribose 1-phosphate: step 4/6. In terms of biological role, bifunctional enzyme that catalyzes the enolization of 2,3-diketo-5-methylthiopentyl-1-phosphate (DK-MTP-1-P) into the intermediate 2-hydroxy-3-keto-5-methylthiopentenyl-1-phosphate (HK-MTPenyl-1-P), which is then dephosphorylated to form the acireductone 1,2-dihydroxy-3-keto-5-methylthiopentene (DHK-MTPene). The sequence is that of Enolase-phosphatase E1 from Candida dubliniensis (strain CD36 / ATCC MYA-646 / CBS 7987 / NCPF 3949 / NRRL Y-17841) (Yeast).